The following is a 328-amino-acid chain: Lateral signaling target 1 protein (328 aa).

3 disordered regions span residues 56 to 78 (SSQD…GLRS), 108 to 135 (PTHY…SASS), and 177 to 200 (PVQP…RLNG). A compositionally biased stretch (polar residues) spans 178-200 (VQPSTSTSRNNVSQISGSSRLNG).

As to quaternary structure, interacts with fbf-2; the interaction probably mediates the release of the C-terminal tail of fbf-2 from the RNA-binding domain, thereby altering its RNA-binding affinity.

Plays a role in germline stem cell maintenance, perhaps acting in concert with mRNA-binding factor fbf-2. May regulate fbf-2 by modulating RNA-binding and perhaps by competition with the intramolecular interaction between the fbf-2 RNA-binding domain and C-terminal tail. The polypeptide is Lateral signaling target 1 protein (Caenorhabditis elegans).